Here is a 164-residue protein sequence, read N- to C-terminus: Sorting nexin-3 (164 aa).

A disordered region spans residues 1–26 (MSGKREFKSFGSTEETMFSQHHKIPS). The segment covering 10-26 (FGSTEETMFSQHHKIPS) has biased composition (polar residues). The PX domain occupies 40 to 163 (IEVRNPKTHV…IRFIEDDKFV (124 aa)). Residues R83, S85, K114, R120, and R129 each coordinate a 1,2-diacyl-sn-glycero-3-phospho-(1D-myo-inositol-3-phosphate).

Belongs to the sorting nexin family.

It localises to the cytoplasm. It is found in the golgi apparatus membrane. Its subcellular location is the prevacuolar compartment membrane. Functionally, required for retention of late Golgi membrane proteins. Component of the retrieval machinery that functions by direct interaction with the cytosolic tails of certain TGN membrane proteins during the sorting/budding process at the prevacuolar compartment. Binds phosphatidylinositol 3-phosphate (PtdIns(P3)). In Candida glabrata (strain ATCC 2001 / BCRC 20586 / JCM 3761 / NBRC 0622 / NRRL Y-65 / CBS 138) (Yeast), this protein is Sorting nexin-3 (SNX3).